A 370-amino-acid chain; its full sequence is UDP-N-acetylglucosamine--N-acetylmuramyl-(pentapeptide) pyrophosphoryl-undecaprenol N-acetylglucosamine transferase (370 aa).

UDP-N-acetyl-alpha-D-glucosamine-binding positions include 15 to 17 (TGG), N129, R170, S200, I253, and Q298.

This sequence belongs to the glycosyltransferase 28 family. MurG subfamily.

Its subcellular location is the cell inner membrane. The catalysed reaction is di-trans,octa-cis-undecaprenyl diphospho-N-acetyl-alpha-D-muramoyl-L-alanyl-D-glutamyl-meso-2,6-diaminopimeloyl-D-alanyl-D-alanine + UDP-N-acetyl-alpha-D-glucosamine = di-trans,octa-cis-undecaprenyl diphospho-[N-acetyl-alpha-D-glucosaminyl-(1-&gt;4)]-N-acetyl-alpha-D-muramoyl-L-alanyl-D-glutamyl-meso-2,6-diaminopimeloyl-D-alanyl-D-alanine + UDP + H(+). The protein operates within cell wall biogenesis; peptidoglycan biosynthesis. Functionally, cell wall formation. Catalyzes the transfer of a GlcNAc subunit on undecaprenyl-pyrophosphoryl-MurNAc-pentapeptide (lipid intermediate I) to form undecaprenyl-pyrophosphoryl-MurNAc-(pentapeptide)GlcNAc (lipid intermediate II). The chain is UDP-N-acetylglucosamine--N-acetylmuramyl-(pentapeptide) pyrophosphoryl-undecaprenol N-acetylglucosamine transferase from Salinibacter ruber (strain DSM 13855 / M31).